A 306-amino-acid polypeptide reads, in one-letter code: Serine/threonine-protein kinase mug51 (306 aa).

The protein belongs to the STK19 family.

The catalysed reaction is L-seryl-[protein] + ATP = O-phospho-L-seryl-[protein] + ADP + H(+). The enzyme catalyses L-threonyl-[protein] + ATP = O-phospho-L-threonyl-[protein] + ADP + H(+). Serine/threonine-protein kinase. Has a role in meiosis. In Schizosaccharomyces pombe (strain 972 / ATCC 24843) (Fission yeast), this protein is Serine/threonine-protein kinase mug51 (mug51).